The sequence spans 173 residues: Alpha-crystallin A chain (173 aa).

Methionine 1 is modified (N-acetylmethionine). The sHSP domain maps to 52–164 (LFRSVLESGI…SDRPIPVARE (113 aa)). Histidine 100, glutamate 102, histidine 107, and histidine 154 together coordinate Zn(2+). Positions 152–173 (TIHSDRPIPVAREEKPTSAPSS) are disordered. A compositionally biased stretch (basic and acidic residues) spans 153 to 167 (IHSDRPIPVAREEKP).

The protein belongs to the small heat shock protein (HSP20) family. Heteropolymer composed of three CRYAA and one CRYAB subunits. Inter-subunit bridging via zinc ions enhances stability, which is crucial as there is no protein turn over in the lens. Can also form homodimers and homotetramers (dimers of dimers) which serve as the building blocks of homooligomers. Within homooligomers, the zinc-binding motif is created from residues of 3 different molecules. His-100 and Glu-102 from one molecule are ligands of the zinc ion, and His-107 and His-154 residues from additional molecules complete the site with tetrahedral coordination geometry.

It is found in the cytoplasm. The protein localises to the nucleus. In terms of biological role, contributes to the transparency and refractive index of the lens. May act as a chaperone, preventing aggregation of various proteins under a wide range of stress conditions. The chain is Alpha-crystallin A chain (CRYAA) from Alligator mississippiensis (American alligator).